We begin with the raw amino-acid sequence, 262 residues long: MDRCGAYLDTMRSTAPLVQCITNFVAMNVMANVLLAAGASPAMVHDAEESGEFAAIAQVLTINLGTPSPRWVEGMEAAARGAVAAGRPWVLDPVAVGATAFRRGLGARLLALKPTVIRGNASEILALAGAEARGKGADSADTVAAAEAAAQRLAEGSGAVVAVTGPVDFVTDGRRGIRCGNGHALMPKVTALGCSLTGIVGAFAAGQPAFEATAAGLAFFGLAGEEAARRAAGPGSFQVAFLDALHAMTPDDLDRGAKLEAA.

A substrate-binding site is contributed by Met-43. Residues Arg-118 and Thr-164 each contribute to the ATP site. Ala-191 is a binding site for substrate.

It belongs to the Thz kinase family. Mg(2+) serves as cofactor.

It catalyses the reaction 5-(2-hydroxyethyl)-4-methylthiazole + ATP = 4-methyl-5-(2-phosphooxyethyl)-thiazole + ADP + H(+). The protein operates within cofactor biosynthesis; thiamine diphosphate biosynthesis; 4-methyl-5-(2-phosphoethyl)-thiazole from 5-(2-hydroxyethyl)-4-methylthiazole: step 1/1. Functionally, catalyzes the phosphorylation of the hydroxyl group of 4-methyl-5-beta-hydroxyethylthiazole (THZ). The protein is Hydroxyethylthiazole kinase of Cereibacter sphaeroides (strain ATCC 17025 / ATH 2.4.3) (Rhodobacter sphaeroides).